A 107-amino-acid polypeptide reads, in one-letter code: UPF0060 membrane protein M446_5886 (107 aa).

The next 4 membrane-spanning stretches (helical) occupy residues 4–24, 31–51, 59–79, and 85–105; these read LLAY…IWAW, PLWL…LTRV, AYAA…WAAE, and RWDL…LLGP.

The protein belongs to the UPF0060 family.

Its subcellular location is the cell inner membrane. This Methylobacterium sp. (strain 4-46) protein is UPF0060 membrane protein M446_5886.